The chain runs to 448 residues: Homogentisate 1,2-dioxygenase (448 aa).

Residue histidine 303 is the Proton acceptor of the active site. Residues histidine 346 and glutamate 352 each contribute to the Fe cation site. Homogentisate contacts are provided by tyrosine 361 and histidine 382. Histidine 382 contacts Fe cation.

It belongs to the homogentisate dioxygenase family. As to quaternary structure, hexamer; dimer of trimers. The cofactor is Fe cation.

The enzyme catalyses homogentisate + O2 = 4-maleylacetoacetate + H(+). The protein operates within amino-acid degradation; L-phenylalanine degradation; acetoacetate and fumarate from L-phenylalanine: step 4/6. In terms of biological role, involved in the catabolism of homogentisate (2,5-dihydroxyphenylacetate or 2,5-OH-PhAc), a central intermediate in the degradation of phenylalanine and tyrosine. Catalyzes the oxidative ring cleavage of the aromatic ring of homogentisate to yield maleylacetoacetate. The sequence is that of Homogentisate 1,2-dioxygenase from Nitrobacter hamburgensis (strain DSM 10229 / NCIMB 13809 / X14).